We begin with the raw amino-acid sequence, 556 residues long: Glutamine--tRNA ligase (556 aa).

A 'HIGH' region motif is present at residues 34–44; that stretch reads PEPNGYLHIGH. Residues 35–37 and 41–47 contribute to the ATP site; these read EPN and HIGHAKS. 2 residues coordinate L-glutamine: D67 and Y212. ATP contacts are provided by residues T231, 261-262, and 269-271; these read RL and MSK. Residues 268–272 carry the 'KMSKS' region motif; the sequence is VMSKR.

The protein belongs to the class-I aminoacyl-tRNA synthetase family. Monomer.

It is found in the cytoplasm. The catalysed reaction is tRNA(Gln) + L-glutamine + ATP = L-glutaminyl-tRNA(Gln) + AMP + diphosphate. The chain is Glutamine--tRNA ligase from Vibrio campbellii (strain ATCC BAA-1116).